Here is a 403-residue protein sequence, read N- to C-terminus: Tryptophan synthase beta chain (403 aa).

Position 93 is an N6-(pyridoxal phosphate)lysine (Lys-93).

This sequence belongs to the TrpB family. Tetramer of two alpha and two beta chains. The cofactor is pyridoxal 5'-phosphate.

The enzyme catalyses (1S,2R)-1-C-(indol-3-yl)glycerol 3-phosphate + L-serine = D-glyceraldehyde 3-phosphate + L-tryptophan + H2O. The protein operates within amino-acid biosynthesis; L-tryptophan biosynthesis; L-tryptophan from chorismate: step 5/5. In terms of biological role, the beta subunit is responsible for the synthesis of L-tryptophan from indole and L-serine. In Acinetobacter baylyi (strain ATCC 33305 / BD413 / ADP1), this protein is Tryptophan synthase beta chain.